The primary structure comprises 185 residues: Ribose 1,5-bisphosphate phosphokinase PhnN (185 aa).

10–17 is a binding site for ATP; the sequence is GPSGSGKD.

It belongs to the ribose 1,5-bisphosphokinase family.

It catalyses the reaction alpha-D-ribose 1,5-bisphosphate + ATP = 5-phospho-alpha-D-ribose 1-diphosphate + ADP. The protein operates within metabolic intermediate biosynthesis; 5-phospho-alpha-D-ribose 1-diphosphate biosynthesis; 5-phospho-alpha-D-ribose 1-diphosphate from D-ribose 5-phosphate (route II): step 3/3. Functionally, catalyzes the phosphorylation of ribose 1,5-bisphosphate to 5-phospho-D-ribosyl alpha-1-diphosphate (PRPP). This chain is Ribose 1,5-bisphosphate phosphokinase PhnN, found in Escherichia coli O157:H7.